The sequence spans 167 residues: NAD(P)H-quinone oxidoreductase subunit I, chloroplastic (167 aa).

2 4Fe-4S ferredoxin-type domains span residues 55-84 (GRIHFEFDKCIACEVCVRVCPIDLPVVDWK) and 95-124 (LNYSIDFGICIFCGNCVEYCPTNCLSMTEE). 8 residues coordinate [4Fe-4S] cluster: cysteine 64, cysteine 67, cysteine 70, cysteine 74, cysteine 104, cysteine 107, cysteine 110, and cysteine 114.

The protein belongs to the complex I 23 kDa subunit family. In terms of assembly, NDH is composed of at least 16 different subunits, 5 of which are encoded in the nucleus. It depends on [4Fe-4S] cluster as a cofactor.

It localises to the plastid. The protein resides in the chloroplast thylakoid membrane. It catalyses the reaction a plastoquinone + NADH + (n+1) H(+)(in) = a plastoquinol + NAD(+) + n H(+)(out). The catalysed reaction is a plastoquinone + NADPH + (n+1) H(+)(in) = a plastoquinol + NADP(+) + n H(+)(out). Its function is as follows. NDH shuttles electrons from NAD(P)H:plastoquinone, via FMN and iron-sulfur (Fe-S) centers, to quinones in the photosynthetic chain and possibly in a chloroplast respiratory chain. The immediate electron acceptor for the enzyme in this species is believed to be plastoquinone. Couples the redox reaction to proton translocation, and thus conserves the redox energy in a proton gradient. This Gossypium barbadense (Sea Island cotton) protein is NAD(P)H-quinone oxidoreductase subunit I, chloroplastic.